The primary structure comprises 2442 residues: CREB-binding protein (2442 aa).

Disordered regions lie at residues 1 to 41 (MAEN…NDLP) and 74 to 179 (LRGG…CMNA). Position 2 is an N-acetylalanine (Ala2). Residues 20-30 (PGFSANDSTDF) show a composition bias toward polar residues. Over residues 80-90 (SSINPGIGNVS) the composition is skewed to low complexity. Position 121 is a phosphoserine (Ser121). Positions 122 to 131 (PLSQGDSSAP) are enriched in polar residues. Phosphoserine; by ATM is present on Ser124. Residues 136-150 (QAASTSGPTPAASQA) are compositionally biased toward low complexity. Residues 151 to 172 (LNPQAQKQVGLATSSPATSQTG) are compositionally biased toward polar residues. Arg220 is modified (omega-N-methylarginine). The interaction with SRCAP stretch occupies residues 227–410 (PTPAMQGASS…GKACQVAHCA (184 aa)). Positions 266 to 290 (KMGITGNTSPFGQPFSQAGGQPMGA) are disordered. Residues 270–284 (TGNTSPFGQPFSQAG) show a composition bias toward polar residues. Residues 347–433 (DPEKRKLIQQ…RHDCPVCLPL (87 aa)) form a TAZ-type 1 zinc finger. 12 residues coordinate Zn(2+): His363, Cys367, Cys380, Cys385, His394, Cys398, Cys404, Cys409, His418, Cys422, Cys427, and Cys430. The KIX domain maps to 587–666 (GVRKGWHEHV…KIYKIQKELE (80 aa)). Asymmetric dimethylarginine is present on residues Arg601 and Arg625. Lys657 bears the N6-acetyllysine mark. Composition is skewed to polar residues over residues 794 to 805 (LPQNQFPSSSGA) and 814 to 823 (PAQTGVSQGQ). The disordered stretch occupies residues 794–1083 (LPQNQFPSSS…STSPSQPRKK (290 aa)). Pro residues-rich tracts occupy residues 844–860 (PCPP…PPPA) and 876–885 (GMTPPQPAAP). 2 stretches are compositionally biased toward low complexity: residues 886–929 (TQPS…VTPQ) and 937–952 (PSVA…PTPV). Polar residues predominate over residues 973-988 (PTPSSVASAETNSQQP). Residue Lys998 forms a Glycyl lysine isopeptide (Lys-Gly) (interchain with G-Cter in SUMO1) linkage. Basic and acidic residues predominate over residues 1011 to 1021 (GESKGEPRSEM). At Lys1014 the chain carries N6-acetyllysine. The residue at position 1030 (Ser1030) is a Phosphoserine. Basic and acidic residues predominate over residues 1032 to 1059 (VKEETDIAEQKSEPMEVDEKKPEVKVEV). Residues Lys1033 and Lys1056 each participate in a glycyl lysine isopeptide (Lys-Gly) (interchain with G-Cter in SUMO1) cross-link. Residues 1066-1078 (SSNGTASQSTSPS) show a composition bias toward low complexity. Ser1076 carries the phosphoserine modification. The Bromo domain maps to 1085-1192 (FKPEELRQAL…EVFEQEIDPV (108 aa)). The interaction with histone stretch occupies residues 1124-1170 (DYFDIVKNPMDLSTIKRKLDTGQYQEPWQYVDDVWLMFNNAWLYNRK). An interaction with ASF1A region spans residues 1162 to 1180 (NNAWLYNRKTSRVYKFCSK). An N6-acetyllysine modification is found at Lys1216. The 378-residue stretch at 1323–1700 (KFSAKRLQTT…MLVELHTQGQ (378 aa)) folds into the CBP/p300-type HAT domain. Phosphoserine; by IKKA occurs at positions 1382 and 1386. Positions 1433–1435 (YLD) are interaction with histone. Acetyl-CoA contacts are provided by residues 1434–1436 (LDS), 1446–1447 (RT), Ile1493, Arg1498, and Trp1502. Residues 1460–1891 (YVKKLGYVTG…LPSPTSAPPG (432 aa)) are interaction with TRERF1. The span at 1556-1568 (LEQEEEERKKEES) shows a compositional bias: basic and acidic residues. The segment at 1556 to 1615 (LEQEEEERKKEESTAASETTEGSQGDSKNAKKKNNKKTNKNKSSISRANKKKPSMPNVSN) is disordered. Lys1583, Lys1591, Lys1592, Lys1595, and Lys1597 each carry N6-acetyllysine. Residues 1585–1595 (AKKKNNKKTNK) are compositionally biased toward basic residues. A ZZ-type zinc finger spans residues 1702 to 1750 (RFVYTCNECKHHVETRWHCTVCEDYDLCINCYNTKSHAHKMVKWGLGLD). Positions 1707, 1710, 1720, 1723, 1729, 1732, 1738, and 1740 each coordinate Zn(2+). Lys1741 and Lys1744 each carry N6-acetyllysine. Phosphoserine is present on Ser1763. A TAZ-type 2 zinc finger spans residues 1765 to 1846 (QESRRLSIQR…KCPVPFCLNI (82 aa)). 2 disordered regions span residues 1874–1959 (TRNV…VEAA) and 1977–2028 (INNS…PLPQ). Positions 1900 to 1912 (PQTPQPPAQPQPS) are enriched in pro residues. A compositionally biased stretch (polar residues) spans 1925-1940 (ARTQPPTTVSTGKPTS). Pro residues predominate over residues 1943 to 1954 (PAPPPPAQPPPA). Residues 2018–2027 (PGQWQQAPLP) show a composition bias toward low complexity. Phosphoserine occurs at positions 2063, 2076, and 2079. Low complexity-rich tracts occupy residues 2112–2137 (QPGM…HQQP), 2146–2160 (QAGV…QQQA), 2196–2219 (QLLQ…QGSA), 2228–2263 (HGQF…SMGQ), and 2294–2305 (RILQQQQMKQQI). Disordered regions lie at residues 2112–2263 (QPGM…SMGQ) and 2294–2433 (RILQ…TTGD). Polar residues-rich tracts occupy residues 2315 to 2327 (SPQQ…QPQA) and 2334 to 2343 (QIATSLSNQV). Positions 2349 to 2372 (VQSPRPQSQPPHSSPSPRIQPQPS) are enriched in pro residues. Ser2351 carries the post-translational modification Phosphoserine. Residues 2411-2424 (QLNTPSRSALSSEL) are compositionally biased toward polar residues.

As to quaternary structure, found in a complex containing NCOA2; NCOA3; IKKA; IKKB and IKBKG. Probably part of a complex with HIF1A and EP300. Interacts with GATA1; the interaction results in acetylation and enhancement of transcriptional activity of GATA1. Interacts with MAF and ZCCHC12. Interacts with DAXX; the interaction is dependent on CBP sumoylation and results in suppression of the transcriptional activity via recruitment of HDAC2 to DAXX. Interacts with phosphorylated CREB1. Interacts with CITED4 (C-terminal region). Interacts (via the TAZ-type 1 domain) with HIF1A. Interacts with SRCAP, CARM1, ELF3, MLLT7/FOXO4, N4BP2, NCOA1, NCOA3, NCOA6, PCAF, DDX5, DDX17, PELP1, PML, SMAD1, SMAD2, SMAD3, SPIB and TRERF1. Interacts with KLF1; the interaction results in acetylation of KLF1 and enhancement of its transcriptional activity. Interacts with MTDH. Interacts with NFATC4. Interacts with MAFG; the interaction acetylates MAFG in the basic region and stimulates NFE2 transcriptional activity through increasing its DNA-binding activity. Interacts with IRF2; the interaction acetylates IRF2 and regulates its activity on the H4 promoter. Interacts with IRF3 (when phosphorylated); forming the dsRNA-activated factor 1 (DRAF1), a complex which activates the transcription of the type I interferon genes. Interacts (via N-terminus) with SS18L1/CREST (via C-terminus). Interacts with MECOM. Interacts with CITED1 (via C-terminus). Interacts with FOXO1; the interaction acetylates FOXO1 and inhibits its transcriptional activity. Interacts with NPAS2, CLOCK and BMAL1. Interacts with ASF1A and ASF1B; this promotes histone acetylation. Interacts with acetylated TP53/p53 and with the acetylated histones H3 and H4. Interacts (via transactivation domain and C-terminus) with PCNA; the interaction occurs on chromatin in UV-irradiated damaged cells. Interacts with DHX9 (via N-terminus); this interaction mediates association with RNA polymerase II holoenzyme and stimulates CREB-dependent transcriptional activation. Interacts with SMAD4; negatively regulated by ZBTB7A. Interacts with DUX4 (via C-terminus). Forms a complex with KMT2A and CREB1. Interacts with DDX3X; this interaction may facilitate HNF4A acetylation. Interacts with MSX1; the interaction may inhibit MSX1 autoinactivation. Interacts with ACSS2. In terms of assembly, (Microbial infection) Interacts with HTLV-1 Tax, p30II and HBZ. (Microbial infection) Interacts with human herpes virus 8/HHV-8 protein vIRF-1; this interaction inhibits CREBBP binding to IRF3. As to quaternary structure, (Microbial infection) Interacts with HIV-1 Tat. Post-translationally, methylation of the KIX domain by CARM1 blocks association with CREB. This results in the blockade of CREB signaling, and in activation of apoptotic response. Phosphorylated by CHUK/IKKA at Ser-1382 and Ser-1386; these phosphorylations promote cell growth by switching the binding preference of CREBBP from TP53 to NF-kappa-B. Phosphorylated by _ at Ser-124 in response to DNA damage, promoting interaction with MRE11 and lactylation of MRE11. In terms of processing, sumoylation negatively regulates transcriptional activity via the recruitment of DAAX. Post-translationally, autoacetylation is required for binding to protein substrates, such as acetylated histones and acetylated TP53/p53. Autoacetylation is induced by glucose and fatty acids.

The protein localises to the cytoplasm. Its subcellular location is the nucleus. The catalysed reaction is L-lysyl-[histone] + acetyl-CoA = N(6)-acetyl-L-lysyl-[histone] + CoA + H(+). It catalyses the reaction L-lysyl-[protein] + acetyl-CoA = N(6)-acetyl-L-lysyl-[protein] + CoA + H(+). The enzyme catalyses (S)-lactoyl-CoA + L-lysyl-[protein] = N(6)-[(S)-lactoyl]-L-lysyl-[protein] + CoA + H(+). In terms of biological role, acetylates histones, giving a specific tag for transcriptional activation. Mediates acetylation of histone H3 at 'Lys-18' and 'Lys-27' (H3K18ac and H3K27ac, respectively). Also acetylates non-histone proteins, like DDX21, FBL, IRF2, MAFG, NCOA3, POLR1E/PAF53 and FOXO1. Binds specifically to phosphorylated CREB and enhances its transcriptional activity toward cAMP-responsive genes. Acts as a coactivator of ALX1. Acts as a circadian transcriptional coactivator which enhances the activity of the circadian transcriptional activators: NPAS2-BMAL1 and CLOCK-BMAL1 heterodimers. Acetylates PCNA; acetylation promotes removal of chromatin-bound PCNA and its degradation during nucleotide excision repair (NER). Acetylates POLR1E/PAF53, leading to decreased association of RNA polymerase I with the rDNA promoter region and coding region. Acetylates DDX21, thereby inhibiting DDX21 helicase activity. Acetylates FBL, preventing methylation of 'Gln-105' of histone H2A (H2AQ104me). In addition to protein acetyltransferase, can use different acyl-CoA substrates, such as lactoyl-CoA, and is able to mediate protein lactylation. Catalyzes lactylation of MRE11 in response to DNA damage, thereby promoting DNA double-strand breaks (DSBs) via homologous recombination (HR). Functions as a transcriptional coactivator for SMAD4 in the TGF-beta signaling pathway. This chain is CREB-binding protein, found in Homo sapiens (Human).